The chain runs to 123 residues: uncharacterized protein (123 aa).

A disordered region spans residues 17 to 74; sequence FQKKKKTGSQTRRTLKPQPQQLQQNLPKGHETTGHTYERVLQQQGSQERSPGLMSEDS. Threonine 30 carries the post-translational modification Phosphothreonine. The segment covering 32 to 43 has biased composition (low complexity); sequence KPQPQQLQQNLP. Basic and acidic residues predominate over residues 44–54; it reads KGHETTGHTYE. Position 62 is a phosphoserine (serine 62).

This is an uncharacterized protein from Homo sapiens (Human).